Consider the following 293-residue polypeptide: 3-methyl-2-oxobutanoate hydroxymethyltransferase (293 aa).

The disordered stretch occupies residues 1 to 25 (MTDSPTAGTPYGTLPPASPLPQRRP). Residues aspartate 67 and aspartate 110 each coordinate Mg(2+). 3-methyl-2-oxobutanoate is bound by residues 67-68 (DS), aspartate 110, and lysine 139. Glutamate 141 lines the Mg(2+) pocket. Glutamate 208 serves as the catalytic Proton acceptor.

It belongs to the PanB family. Homodecamer; pentamer of dimers. Mg(2+) is required as a cofactor.

It is found in the cytoplasm. The catalysed reaction is 3-methyl-2-oxobutanoate + (6R)-5,10-methylene-5,6,7,8-tetrahydrofolate + H2O = 2-dehydropantoate + (6S)-5,6,7,8-tetrahydrofolate. It functions in the pathway cofactor biosynthesis; (R)-pantothenate biosynthesis; (R)-pantoate from 3-methyl-2-oxobutanoate: step 1/2. In terms of biological role, catalyzes the reversible reaction in which hydroxymethyl group from 5,10-methylenetetrahydrofolate is transferred onto alpha-ketoisovalerate to form ketopantoate. The protein is 3-methyl-2-oxobutanoate hydroxymethyltransferase of Acidovorax sp. (strain JS42).